The sequence spans 384 residues: GTPase Obg (384 aa).

The region spanning 1–159 is the Obg domain; sequence MKFVDEVEIR…RPLKLELMLL (159 aa). Positions 72–94 are disordered; that stretch reads NGMGKNCTGRRGNDIVLPVPPGT. Residues 160 to 333 enclose the OBG-type G domain; sequence ADVGLLGMPN…LCREVMSYLE (174 aa). GTP-binding positions include 166–173, 191–195, 213–216, 283–286, and 314–316; these read GMPNAGKS, FTTLI, DIPG, NKVD, and AAL. Residues serine 173 and threonine 193 each coordinate Mg(2+). Residues 358–384 form a disordered region; sequence EEVLEEEMDDEDDDDDDDHDVEVIYQK. Residues 360–377 are compositionally biased toward acidic residues; that stretch reads VLEEEMDDEDDDDDDDHD.

It belongs to the TRAFAC class OBG-HflX-like GTPase superfamily. OBG GTPase family. Monomer. It depends on Mg(2+) as a cofactor.

The protein resides in the cytoplasm. An essential GTPase which binds GTP, GDP and possibly (p)ppGpp with moderate affinity, with high nucleotide exchange rates and a fairly low GTP hydrolysis rate. Plays a role in control of the cell cycle, stress response, ribosome biogenesis and in those bacteria that undergo differentiation, in morphogenesis control. In Idiomarina loihiensis (strain ATCC BAA-735 / DSM 15497 / L2-TR), this protein is GTPase Obg.